The chain runs to 262 residues: MASYKERSESHTSPVARRLFSIMEEKKSNLCASLDITETEKLLSILDTIGPYICLVKTHIDIVSDFTYEGTVLPLKELAKKHNFMIFEDRKFADIGNTVKNQYKSGVFRIAEWADITNAHGVTGAGIVSGLKEAAQETTSEPRGLLMLAELSSKGSLAYGEYTEKTVEIAKSDKEFVIGFIAQHDMGGREEGFDWIIMTPGVGLDDKGDALGQQYRTVDEVVKTGTDIIIVGRGLYGQGRDPIEQAKRYQQAGWNAYLNRFK.

Substrate is bound by residues Asp35, 57-59, 89-98, Tyr215, and Arg233; these read KTH and DRKFADIGNT. The active-site Proton donor is the Lys91.

This sequence belongs to the OMP decarboxylase family.

It carries out the reaction orotidine 5'-phosphate + H(+) = UMP + CO2. It functions in the pathway pyrimidine metabolism; UMP biosynthesis via de novo pathway; UMP from orotate: step 2/2. The chain is Orotidine 5'-phosphate decarboxylase (URA3) from Pichia kudriavzevii (Yeast).